Reading from the N-terminus, the 313-residue chain is Ribosomal RNA small subunit methyltransferase H (313 aa).

Residues 35-37 (GGH), Asp-55, Phe-79, Asp-100, and Gln-107 each bind S-adenosyl-L-methionine.

This sequence belongs to the methyltransferase superfamily. RsmH family.

The protein localises to the cytoplasm. It carries out the reaction cytidine(1402) in 16S rRNA + S-adenosyl-L-methionine = N(4)-methylcytidine(1402) in 16S rRNA + S-adenosyl-L-homocysteine + H(+). Specifically methylates the N4 position of cytidine in position 1402 (C1402) of 16S rRNA. The protein is Ribosomal RNA small subunit methyltransferase H of Burkholderia pseudomallei (strain K96243).